We begin with the raw amino-acid sequence, 131 residues long: UPF0146 protein PH0209 (131 aa).

It belongs to the UPF0146 family.

This Pyrococcus horikoshii (strain ATCC 700860 / DSM 12428 / JCM 9974 / NBRC 100139 / OT-3) protein is UPF0146 protein PH0209.